The sequence spans 356 residues: 5-amino-6-(D-ribitylamino)uracil--L-tyrosine 4-hydroxyphenyl transferase (356 aa).

The Radical SAM core domain occupies Val47 to His281. 3 residues coordinate [4Fe-4S] cluster: Cys61, Cys65, and Cys68.

This sequence belongs to the radical SAM superfamily. CofH family. Consists of two subunits, CofG and CofH. It depends on [4Fe-4S] cluster as a cofactor.

The catalysed reaction is 5-amino-6-(D-ribitylamino)uracil + L-tyrosine + S-adenosyl-L-methionine = 5-amino-5-(4-hydroxybenzyl)-6-(D-ribitylimino)-5,6-dihydrouracil + 2-iminoacetate + 5'-deoxyadenosine + L-methionine + H(+). It participates in cofactor biosynthesis; coenzyme F0 biosynthesis. In terms of biological role, catalyzes the radical-mediated synthesis of 5-amino-5-(4-hydroxybenzyl)-6-(D-ribitylimino)-5,6-dihydrouracil from 5-amino-6-(D-ribitylamino)uracil and L-tyrosine. This is 5-amino-6-(D-ribitylamino)uracil--L-tyrosine 4-hydroxyphenyl transferase from Methanococcoides burtonii (strain DSM 6242 / NBRC 107633 / OCM 468 / ACE-M).